The following is a 353-amino-acid chain: Methylthioribose-1-phosphate isomerase (353 aa).

Residues 51 to 53 (RGA), R94, and Q199 each bind substrate. D240 acts as the Proton donor in catalysis. 250 to 251 (NK) serves as a coordination point for substrate.

This sequence belongs to the eIF-2B alpha/beta/delta subunits family. MtnA subfamily. Homodimer.

The enzyme catalyses 5-(methylsulfanyl)-alpha-D-ribose 1-phosphate = 5-(methylsulfanyl)-D-ribulose 1-phosphate. The protein operates within amino-acid biosynthesis; L-methionine biosynthesis via salvage pathway; L-methionine from S-methyl-5-thio-alpha-D-ribose 1-phosphate: step 1/6. In terms of biological role, catalyzes the interconversion of methylthioribose-1-phosphate (MTR-1-P) into methylthioribulose-1-phosphate (MTRu-1-P). The sequence is that of Methylthioribose-1-phosphate isomerase from Bacillus licheniformis (strain ATCC 14580 / DSM 13 / JCM 2505 / CCUG 7422 / NBRC 12200 / NCIMB 9375 / NCTC 10341 / NRRL NRS-1264 / Gibson 46).